Consider the following 621-residue polypeptide: GPI-anchor transamidase component GPAA1 (621 aa).

Residues 2–19 (GLLSDPVRRRALARLVLR) are Cytoplasmic-facing. Residues 20 to 41 (LNAPLCVLSYVAGIAWFLALVF) form a helical membrane-spanning segment. Topologically, residues 42–370 (PPLTQRTYMS…LLPGLSRFVS (329 aa)) are lumenal. A 2-acyl-6-[6-phosphoethanolamine-alpha-D-mannosyl-(1-&gt;2)-6-phosphoethanolamine-alpha-D-mannosyl-(1-&gt;6)-2-phosphoethanolamine-alpha-D-mannosyl-(1-&gt;4)-alpha-D-glucosaminyl]-1-(1-radyl,2-acyl-sn-glycero-3-phospho)-1D-myo-inositol is bound by residues Tyr-49 and Ser-51. Residue Asn-203 is glycosylated (N-linked (GlcNAc...) asparagine). The cysteines at positions 259 and 266 are disulfide-linked. A 2-acyl-6-[6-phosphoethanolamine-alpha-D-mannosyl-(1-&gt;2)-6-phosphoethanolamine-alpha-D-mannosyl-(1-&gt;6)-2-phosphoethanolamine-alpha-D-mannosyl-(1-&gt;4)-alpha-D-glucosaminyl]-1-(1-radyl,2-acyl-sn-glycero-3-phospho)-1D-myo-inositol-binding residues include His-354, Gln-355, and Ser-356. Mg(2+) is bound at residue Gln-355. A helical transmembrane segment spans residues 371–393 (IGLYMPAVGFLLLVLGLKALELW). Over 394–425 (MQLHEAGMGLEEPGGAPGPSVPLPPSQGVGLA) the chain is Cytoplasmic. Residues 426–450 (SLVAPLLISQAMGLALYVLPVLGQH) traverse the membrane as a helical segment. The Lumenal segment spans residues 451 to 462 (VATQHFPVAEAE). Residues 463–483 (AVVLTLLAIYAAGLALPHNTH) traverse the membrane as a helical segment. Residues 484 to 495 (RVVSTQAPDRGW) are Cytoplasmic-facing. Helical transmembrane passes span 496–519 (MALKLVALIYLALQLGCIALTNFS) and 520–536 (LGFLLATTMVPTAALAK). Residues 537–540 (PHGP) are Cytoplasmic-facing. The chain crosses the membrane as a helical span at residues 541–563 (RTLYAALLVLTSPAATLLGSLFL). Residues 564 to 597 (WRELQEAPLSLAEGWQLFLAALAQGVLEHHTYGA) are Lumenal-facing. A helical membrane pass occupies residues 598–619 (LLFPLLSLGLYPCWLLFWNVLF). At 620-621 (WK) the chain is on the cytoplasmic side.

In terms of assembly, heteropentamer. Part of the GPI-anchor transamidase complex, consisting of PIGK, PIGT, PIGS, PIGU and GAA1. Interacts with PIGK. In terms of tissue distribution, ubiquitously expressed in fetal and adult tissues. Expressed at higher levels in fetal tissues than adult tissues.

It is found in the endoplasmic reticulum membrane. It participates in glycolipid biosynthesis; glycosylphosphatidylinositol-anchor biosynthesis. Functionally, component of the glycosylphosphatidylinositol-anchor (GPI-anchor) transamidase (GPI-T) complex that catalyzes the formation of the linkage between a proprotein and a GPI-anchor and participates in GPI anchored protein biosynthesis. Binds GPI-anchor. The polypeptide is GPI-anchor transamidase component GPAA1 (Homo sapiens (Human)).